A 211-amino-acid polypeptide reads, in one-letter code: Large ribosomal subunit protein bL25 (211 aa).

Disordered regions lie at residues Met1–Gln23 and Leu191–Val211. Positions Asn196–Val211 are enriched in acidic residues.

Belongs to the bacterial ribosomal protein bL25 family. CTC subfamily. As to quaternary structure, part of the 50S ribosomal subunit; part of the 5S rRNA/L5/L18/L25 subcomplex. Contacts the 5S rRNA. Binds to the 5S rRNA independently of L5 and L18.

In terms of biological role, this is one of the proteins that binds to the 5S RNA in the ribosome where it forms part of the central protuberance. The chain is Large ribosomal subunit protein bL25 from Dinoroseobacter shibae (strain DSM 16493 / NCIMB 14021 / DFL 12).